The sequence spans 403 residues: Rhomboid-like protein 15 (403 aa).

Transmembrane regions (helical) follow at residues 22–42 (IPFL…ICLL), 70–90 (AIIF…LVPM), 103–123 (LLYL…LIAS), 141–161 (AIGF…LSGV), and 176–196 (LYPW…SLLG). Catalysis depends on Ser145, which acts as the Nucleophile. His197 (charge relay system) is an active-site residue. Residues 198 to 218 (LCGILSGFSYSYGLFNFLMPG) form a helical membrane-spanning segment. Positions 282–316 (EASNQSSEDSRFPGRGRTLSTARDPTAPAGETDPN) are disordered. The 41-residue stretch at 361 to 401 (AASEEQIQKLVAMGFDRTQVEVALAAADDDLTVAVEILMSQ) folds into the UBA domain.

Belongs to the peptidase S54 family.

Its subcellular location is the membrane. Functionally, probable rhomboid-type serine protease that catalyzes intramembrane proteolysis. May function in senescence. This is Rhomboid-like protein 15 from Arabidopsis thaliana (Mouse-ear cress).